The sequence spans 131 residues: Probable ATP synthase subunit g 2, mitochondrial (131 aa).

This sequence belongs to the ATPase g subunit family. Subunit of the F-type ATPase which has 2 components, CF(1) - the catalytic core - and CF(0) - the membrane proton channel.

The protein localises to the mitochondrion membrane. In terms of biological role, mitochondrial membrane ATP synthase (F(1)F(0) ATP synthase or Complex V) produces ATP from ADP in the presence of a proton gradient across the membrane which is generated by electron transport complexes of the respiratory chain. F-type ATPases consist of two structural domains, F(1) - containing the extramembraneous catalytic core, and F(0) - containing the membrane proton channel, linked together by a central stalk and a peripheral stalk. During catalysis, ATP synthesis in the catalytic domain of F(1) is coupled via a rotary mechanism of the central stalk subunits to proton translocation. Part of the complex F(0) domain. Minor subunit located with subunit a in the membrane. This chain is Probable ATP synthase subunit g 2, mitochondrial, found in Caenorhabditis elegans.